The chain runs to 577 residues: Proline--tRNA ligase (577 aa).

It belongs to the class-II aminoacyl-tRNA synthetase family. ProS type 1 subfamily. Homodimer.

The protein resides in the cytoplasm. The catalysed reaction is tRNA(Pro) + L-proline + ATP = L-prolyl-tRNA(Pro) + AMP + diphosphate. Its function is as follows. Catalyzes the attachment of proline to tRNA(Pro) in a two-step reaction: proline is first activated by ATP to form Pro-AMP and then transferred to the acceptor end of tRNA(Pro). As ProRS can inadvertently accommodate and process non-cognate amino acids such as alanine and cysteine, to avoid such errors it has two additional distinct editing activities against alanine. One activity is designated as 'pretransfer' editing and involves the tRNA(Pro)-independent hydrolysis of activated Ala-AMP. The other activity is designated 'posttransfer' editing and involves deacylation of mischarged Ala-tRNA(Pro). The misacylated Cys-tRNA(Pro) is not edited by ProRS. The protein is Proline--tRNA ligase of Thermotoga sp. (strain RQ2).